We begin with the raw amino-acid sequence, 310 residues long: Forkhead box protein pes-1 (310 aa).

Residues 1-16 show a composition bias toward polar residues; the sequence is MLPLSISTSPDPASQF. 4 disordered regions span residues 1–37, 58–77, 92–126, and 217–242; these read MLPL…GTAK, VSPS…SPAP, KQSS…SNPN, and SLRR…PNPI. Residues 17-35 are compositionally biased toward low complexity; the sequence is PTVPDLPTLTPTPSPTSGT. The segment at residues 128–220 is a DNA-binding region (fork-head); sequence RPAYSYNALI…IGKDCGSLRR (93 aa). Positions 218–231 are enriched in basic residues; that stretch reads LRRKKNGKPRKYSK.

It localises to the nucleus. The protein localises to the cytoplasm. Functionally, transcription factor. Plays a role in embryogenesis and later development, perhaps acting redundantly with forkhead protein fkh-2. This Caenorhabditis briggsae protein is Forkhead box protein pes-1.